Reading from the N-terminus, the 105-residue chain is Saimiri transformation-associated protein (105 aa).

The Cytoplasmic portion of the chain corresponds to Met-1–Gly-75. The tract at residues Met-1–Gly-75 is disordered. Positions Gly-15–Pro-74 constitute a Collagen-like domain. Over residues Gln-20–Ser-71 the composition is skewed to pro residues. The chain crosses the membrane as a helical span at residues Leu-76–Ile-96. At Leu-97 to Asn-105 the chain is on the extracellular side.

As to quaternary structure, binds to host RAS and TRAF2.

It localises to the host membrane. Acts synergistically with Tip to stimulate NF-kappa-B activity and interleukin-2 gene expression by binding to host TRAF proteins. Activation of NF-kappa-B protects lymphocytes from apoptosis, thereby facilitating viral induced cell transformation. The protein is Saimiri transformation-associated protein of Saimiriine herpesvirus 2 (strain 484-77) (SaHV-2).